Here is a 662-residue protein sequence, read N- to C-terminus: Glycine--tRNA ligase beta subunit (662 aa).

It belongs to the class-II aminoacyl-tRNA synthetase family. In terms of assembly, tetramer of two alpha and two beta subunits.

It localises to the cytoplasm. The enzyme catalyses tRNA(Gly) + glycine + ATP = glycyl-tRNA(Gly) + AMP + diphosphate. The polypeptide is Glycine--tRNA ligase beta subunit (Rickettsia akari (strain Hartford)).